Reading from the N-terminus, the 212-residue chain is SOSS complex subunit B1 (212 aa).

Residues Ile22–Leu92 constitute a DNA-binding region (OB). The disordered stretch occupies residues Glu110–Arg212. Residues Glu114–Asn130 show a composition bias toward polar residues. Position 117 is a phosphothreonine; by ATM (Thr117). Positions Ser131–Ser148 are enriched in low complexity. Over residues Glu149–Leu160 the composition is skewed to polar residues. Over residues Pro166–Thr178 the composition is skewed to low complexity.

The protein belongs to the SOSS-B family. SOSS-B1 subfamily. As to quaternary structure, component of the SOSS complex, composed of SOSS-B (SOSS-B1/NABP2 or SOSS-B2/NABP1), SOSS-A/INTS3 and SOSS-C/INIP. SOSS complexes containing SOSS-B1/NABP2 are more abundant than complexes containing SOSS-B2/NABP1. Directly interacts with ATM, SOSS-A/INTS3 and RAD51. Interacts with INTS7. Post-translationally, phosphorylated by ATM in response to DNA damage. Phosphorylation prevents degradation by the proteasome, hence stabilization of the protein and accumulation within cells. Ubiquitinated in a FBXL5-dependent manner, leading to proteasomal degradation.

The protein resides in the nucleus. Its function is as follows. Component of the SOSS complex, a multiprotein complex that functions downstream of the MRN complex to promote DNA repair and G2/M checkpoint. In the SOSS complex, acts as a sensor of single-stranded DNA that binds to single-stranded DNA, in particular to polypyrimidines. The SOSS complex associates with DNA lesions and influences diverse endpoints in the cellular DNA damage response including cell-cycle checkpoint activation, recombinational repair and maintenance of genomic stability. Required for efficient homologous recombination-dependent repair of double-strand breaks (DSBs) and ATM-dependent signaling pathways. This Mus musculus (Mouse) protein is SOSS complex subunit B1 (Nabp2).